The sequence spans 526 residues: Tyrosine 2,3-aminomutase (526 aa).

Catalysis depends on Tyr41, which acts as the Proton donor/acceptor. His71 is a binding site for substrate. The segment at residues 130–132 is a cross-link (5-imidazolinone (Ala-Gly)); sequence ASG. Ser131 carries the 2,3-didehydroalanine (Ser) modification. 2 residues coordinate substrate: Asn183 and Arg288.

This sequence belongs to the TAL/TAM family. As to quaternary structure, homotetramer; dimer of dimers. Contains an active site 4-methylidene-imidazol-5-one (MIO), which is formed autocatalytically by cyclization and dehydration of residues Ala-Ser-Gly.

The catalysed reaction is L-tyrosine = 3-amino-3-(4-hydroxyphenyl)propanoate. It catalyses the reaction L-tyrosine = (E)-4-coumarate + NH4(+). In terms of biological role, has aminomutase and, to a much lesser extent, ammonia-lyase activity. Primarily, catalyzes the rearrangement of L-tyrosine to S-beta-tyrosine, which is probably incorporated into secondary metabolite myxovalargin. The aminomutase activity exclusively produces S-beta-tyrosine. This Myxococcus sp. (strain Mx-B0) protein is Tyrosine 2,3-aminomutase.